The following is a 173-amino-acid chain: Probable capsid assembly scaffolding protein (173 aa).

Positions 1 to 13 (MSDNPTPESTPEA) are enriched in low complexity. Positions 1-27 (MSDNPTPESTPEAETPEVEKPMEPQGK) are disordered. A coiled-coil region spans residues 36 to 84 (SLRQEAAAARVAKKDAVEAAEARVKAEYEAKLAERDTAYTELQNQLGQA). The interval 134-158 (GNKTPSPAFDPSQGRGGKPPIPLNG) is disordered.

It belongs to the L5likevirus scaffolding protein family.

Scaffolding protein involved in the icosahedric procapsid assembly. Coassembles with the capsid proteins to form the procapsid, in which the scaffolding protein is found within the external shell of icosahedrally arranged capsid protein subunits. The protein is Probable capsid assembly scaffolding protein (16) of Mycobacterium (Mycobacteriophage L5).